Reading from the N-terminus, the 109-residue chain is METRASLRGVRLSAQKGRLVADLVRGKPVGQALNILAFCPKKGAGIVKKVLESAIANAEHNDGADIDELTVKTIYVEKGMVLKRFTARAKGRGNRIIKPTCHIYLTVGN.

Belongs to the universal ribosomal protein uL22 family. Part of the 50S ribosomal subunit.

Functionally, this protein binds specifically to 23S rRNA; its binding is stimulated by other ribosomal proteins, e.g. L4, L17, and L20. It is important during the early stages of 50S assembly. It makes multiple contacts with different domains of the 23S rRNA in the assembled 50S subunit and ribosome. The globular domain of the protein is located near the polypeptide exit tunnel on the outside of the subunit, while an extended beta-hairpin is found that lines the wall of the exit tunnel in the center of the 70S ribosome. The chain is Large ribosomal subunit protein uL22 from Dechloromonas aromatica (strain RCB).